Here is an 87-residue protein sequence, read N- to C-terminus: Small ribosomal subunit protein bS20 (87 aa).

The segment at 1–26 is disordered; it reads MANIKSAKKRAVQSEKARKHNASRRS.

Belongs to the bacterial ribosomal protein bS20 family.

Functionally, binds directly to 16S ribosomal RNA. The sequence is that of Small ribosomal subunit protein bS20 from Enterobacter sp. (strain 638).